The primary structure comprises 238 residues: Urease accessory protein UreF (238 aa).

Belongs to the UreF family. UreD, UreF and UreG form a complex that acts as a GTP-hydrolysis-dependent molecular chaperone, activating the urease apoprotein by helping to assemble the nickel containing metallocenter of UreC. The UreE protein probably delivers the nickel.

The protein localises to the cytoplasm. Functionally, required for maturation of urease via the functional incorporation of the urease nickel metallocenter. This chain is Urease accessory protein UreF, found in Rhodopseudomonas palustris (strain BisA53).